We begin with the raw amino-acid sequence, 127 residues long: Holo-[acyl-carrier-protein] synthase (127 aa).

Mg(2+) is bound by residues aspartate 9 and glutamate 58.

It belongs to the P-Pant transferase superfamily. AcpS family. Mg(2+) serves as cofactor.

The protein localises to the cytoplasm. The catalysed reaction is apo-[ACP] + CoA = holo-[ACP] + adenosine 3',5'-bisphosphate + H(+). Its function is as follows. Transfers the 4'-phosphopantetheine moiety from coenzyme A to a Ser of acyl-carrier-protein. The polypeptide is Holo-[acyl-carrier-protein] synthase (Shewanella sp. (strain MR-7)).